A 399-amino-acid polypeptide reads, in one-letter code: Acetate kinase (399 aa).

Asparagine 10 is a Mg(2+) binding site. ATP is bound at residue lysine 17. Arginine 91 is a binding site for substrate. Aspartate 148 functions as the Proton donor/acceptor in the catalytic mechanism. ATP contacts are provided by residues 208–212, 283–285, and 331–335; these read HLGNG, DCR, and GIGEN. Glutamate 385 contacts Mg(2+).

Belongs to the acetokinase family. In terms of assembly, homodimer. The cofactor is Mg(2+). Mn(2+) serves as cofactor.

The protein resides in the cytoplasm. The enzyme catalyses acetate + ATP = acetyl phosphate + ADP. It functions in the pathway metabolic intermediate biosynthesis; acetyl-CoA biosynthesis; acetyl-CoA from acetate: step 1/2. In terms of biological role, catalyzes the formation of acetyl phosphate from acetate and ATP. Can also catalyze the reverse reaction. The protein is Acetate kinase of Shewanella oneidensis (strain ATCC 700550 / JCM 31522 / CIP 106686 / LMG 19005 / NCIMB 14063 / MR-1).